The primary structure comprises 389 residues: Cytochrome b (389 aa).

Helical transmembrane passes span Met36–Met56, Trp80–Ala102, Val117–Cys137, and Phe183–Met203. 2 residues coordinate heme b: His86 and His100. 2 residues coordinate heme b: His187 and His201. Residue His206 coordinates a ubiquinone. The next 4 membrane-spanning stretches (helical) occupy residues Phe229 to Phe249, Leu293 to Asp313, Leu325 to Met345, and Phe352 to Pro372.

It belongs to the cytochrome b family. In terms of assembly, fungal cytochrome b-c1 complex contains 10 subunits; 3 respiratory subunits, 2 core proteins and 5 low-molecular weight proteins. Cytochrome b-c1 complex is a homodimer. Heme b serves as cofactor.

It is found in the mitochondrion inner membrane. Its function is as follows. Component of the ubiquinol-cytochrome c reductase complex (complex III or cytochrome b-c1 complex) that is part of the mitochondrial respiratory chain. The b-c1 complex mediates electron transfer from ubiquinol to cytochrome c. Contributes to the generation of a proton gradient across the mitochondrial membrane that is then used for ATP synthesis. The chain is Cytochrome b (COB) from Vanderwaltozyma polyspora (strain ATCC 22028 / DSM 70294 / BCRC 21397 / CBS 2163 / NBRC 10782 / NRRL Y-8283 / UCD 57-17) (Kluyveromyces polysporus).